A 1374-amino-acid chain; its full sequence is DNA-directed RNA polymerase subunit beta' (1374 aa).

The interval 1 to 47 (MTSTSPKSRKPSTKTTKSKSKSKSKSKAAKAAAAGASPALARTPPQF) is disordered. The segment covering 7 to 28 (KSRKPSTKTTKSKSKSKSKSKA) has biased composition (basic residues). The span at 29-39 (AKAAAAGASPA) shows a compositional bias: low complexity. Residues Cys258, Cys325, Cys332, and Cys335 each coordinate Zn(2+). Positions 1344–1374 (RPTGENELEEEQLPDPSALEGLQQEGLLTEE) are disordered. The segment covering 1362–1374 (LEGLQQEGLLTEE) has biased composition (low complexity).

This sequence belongs to the RNA polymerase beta' chain family. RpoC2 subfamily. In terms of assembly, in cyanobacteria the RNAP catalytic core is composed of 2 alpha, 1 beta, 1 beta', 1 gamma and 1 omega subunit. When a sigma factor is associated with the core the holoenzyme is formed, which can initiate transcription. Requires Zn(2+) as cofactor.

The enzyme catalyses RNA(n) + a ribonucleoside 5'-triphosphate = RNA(n+1) + diphosphate. In terms of biological role, DNA-dependent RNA polymerase catalyzes the transcription of DNA into RNA using the four ribonucleoside triphosphates as substrates. The polypeptide is DNA-directed RNA polymerase subunit beta' (Prochlorococcus marinus (strain MIT 9313)).